The primary structure comprises 908 residues: Putative cell signaling protein HAM1 (908 aa).

Disordered stretches follow at residues 1-24 (MSVA…SAVS) and 177-359 (TKAA…EHRQ). Basic and acidic residues-rich tracts occupy residues 179–192 (AADK…KLDS), 231–247 (HPRD…DKGK), 261–283 (AKSD…KETG), 306–321 (EQKE…KRDA), and 338–359 (NQEK…EHRQ). A coiled-coil region spans residues 255–282 (YNQAQEAKSDAQSKAQDLKSSARDYKET).

Post-translationally, palmitoylated.

Functionally, may act as a negative regulator of mating during vegetative growth. The chain is Putative cell signaling protein HAM1 from Cryptococcus neoformans var. grubii serotype A (strain H99 / ATCC 208821 / CBS 10515 / FGSC 9487) (Filobasidiella neoformans var. grubii).